The chain runs to 535 residues: Lecithin-cholesterol acyltransferase-like 4 (535 aa).

S2 is subject to N-acetylserine. S182 serves as the catalytic Acyl-ester intermediate. Residues D391 and H416 each act as charge relay system in the active site. Positions 488 to 505 (STVNSISVSQPGDDQNPQ) are enriched in polar residues. A disordered region spans residues 488–507 (STVNSISVSQPGDDQNPQAE).

It belongs to the AB hydrolase superfamily. Lipase family.

The sequence is that of Lecithin-cholesterol acyltransferase-like 4 (LCAT4) from Arabidopsis thaliana (Mouse-ear cress).